Here is a 331-residue protein sequence, read N- to C-terminus: MVRVAIDAMGGDFGPAPIVEGTLLALNEKDFIPFLVGNKEIIEPLIPQKYKKTLEIIDCKDFIKMEEGASSAIRRKDSSIYVATELAKEGKVDALVSAGHSGATMSLATLRIGRIEGASRPAICAIMPRQDGKQSLILDAGANVDCKPEHLYEFALMGYEYSKNVMGYENPRIGLLSNGEEESKGNELTKSAFSRLKTLKGFVGNVEGHNIFDGSTEVIVCDGFVGNIVLKTSEGVAESITTLIKNFVKVSLTGVVGALFMKNVFKKLKKRMDYAEYGGAPLLGVNGNVIICHGKSNAKAIKNAIFQALTSVDQKINENIIKAFASHPSKE.

The protein belongs to the PlsX family. In terms of assembly, homodimer. Probably interacts with PlsY.

It localises to the cytoplasm. The enzyme catalyses a fatty acyl-[ACP] + phosphate = an acyl phosphate + holo-[ACP]. Its pathway is lipid metabolism; phospholipid metabolism. In terms of biological role, catalyzes the reversible formation of acyl-phosphate (acyl-PO(4)) from acyl-[acyl-carrier-protein] (acyl-ACP). This enzyme utilizes acyl-ACP as fatty acyl donor, but not acyl-CoA. The protein is Phosphate acyltransferase of Wolinella succinogenes (strain ATCC 29543 / DSM 1740 / CCUG 13145 / JCM 31913 / LMG 7466 / NCTC 11488 / FDC 602W) (Vibrio succinogenes).